A 438-amino-acid polypeptide reads, in one-letter code: Plasmalemma vesicle-associated protein (438 aa).

The Cytoplasmic portion of the chain corresponds to Met-1–Tyr-26. The helical; Signal-anchor for type II membrane protein transmembrane segment at Phe-27 to Ile-47 threads the bilayer. At Tyr-48 to Gly-438 the chain is on the extracellular side. N-linked (GlcNAc...) asparagine glycans are attached at residues Asn-82, Asn-88, Asn-112, and Asn-150. Residues Ala-289–Leu-383 are a coiled coil. The interval Pro-393 to Gly-438 is disordered. 2 stretches are compositionally biased toward pro residues: residues Leu-399–Asp-410 and Leu-429–Gly-438.

In terms of assembly, homodimer. Expressed in lung (alveolar endothelial and bronchial epithelial cells), kidney (endothelium of peritubular capillaries), spleen, liver, adrenal (endothelial cells of the zona reticularis of the cortex and chromaffin cells in the medulla), pancreas (islets of Langerhans), testis (germ cells, interstitial cells in neonatal testis and spermatids), ovary (stromal endothelial, thecal layer of developing follicles, luteal cells within the corpus luteum), intestine (endothelium of capillaries of the intestinal villi) and pituitary (pituicyte cells in the neural lobe) (at protein level). Expressed in lung, kidney, spleen, liver, adrenal, testis, heart, muscle, pituitary, thyroid and ovary.

Its subcellular location is the cell membrane. It is found in the membrane. The protein localises to the caveola. It localises to the cytoplasm. The protein resides in the perinuclear region. Functionally, endothelial cell-specific membrane protein involved in the formation of the diaphragms that bridge endothelial fenestrae. It is also required for the formation of stomata of caveolae and transendothelial channels. Functions in microvascular permeability, endothelial fenestrae contributing to the passage of water and solutes and regulating transcellular versus paracellular flow in different organs. Plays a specific role in embryonic development. In Rattus norvegicus (Rat), this protein is Plasmalemma vesicle-associated protein (Plvap).